The primary structure comprises 385 residues: Trans-enoyl reductase tasC (385 aa).

An NADP(+)-binding site is contributed by 49 to 52 (VDTK). 136–143 (NSWYTVAW) lines the substrate pocket. NADP(+)-binding positions include 196–199 (SSST), 219–222 (SARN), and 284–285 (LD). A substrate-binding site is contributed by 305–309 (GPELM). NADP(+) is bound at residue 374–375 (VS).

The protein belongs to the zinc-containing alcohol dehydrogenase family. Monomer.

It catalyses the reaction (2S,4S)-4-hydroxy-4-methylglutamate + 8 malonyl-CoA + 3 S-adenosyl-L-methionine + ATP + 8 NADPH + 11 H(+) = (2S)-3-[(2S)-3,5-dioxo-4-[(2E,4R,6R,8E,10E,12E)-4,6,12-trimethyltetradeca-2,8,10,12-tetraenoyl]pyrrolidin-2-yl]-2-hydroxy-2-methylpropanoate + AMP + 3 S-adenosyl-L-homocysteine + 8 CO2 + diphosphate + 8 NADP(+) + 8 CoA + 6 H2O. The catalysed reaction is (2S,4R)-4-hydroxy-4-methylglutamate + 8 malonyl-CoA + 3 S-adenosyl-L-methionine + ATP + 8 NADPH + 11 H(+) = (2R)-3-[(2S)-3,5-dioxo-4-[(2E,4R,6R,8E,10E,12E)-4,6,12-trimethyltetradeca-2,8,10,12-tetraenoyl]pyrrolidin-2-yl]-2-hydroxy-2-methylpropanoate + AMP + 3 S-adenosyl-L-homocysteine + 8 CO2 + diphosphate + 8 NADP(+) + 8 CoA + 6 H2O. It functions in the pathway secondary metabolite biosynthesis. In terms of biological role, trans-enoyl reductase; part of the gene cluster that mediates the biosynthesis of the tetramic acids Sch210971 and Sch210972, potential anti-HIV fungal natural product that contain a decalin core. The PKS module of tasS together with the enoylreductase tasC catalyze the formation of the polyketide unit which is then conjugated to 4-hydroxyl-4-methyl glutamate (HMG) by the condensation domain of the tasS NRPS module. One unique structural feature of Sch210971 and Sch210972 is the tetramic acid motif proposed to be derived from the non-proteinogenic amino acid HMG, by a Dieckmann-type condensation catalyzed by the reductase domain of tasS. The aldolase tasA catalyzes the aldol condensation of 2 molecules of pyruvic acid to yield the intermediate 4-hydroxyl-4-methyl-2-oxoglutarate (HMOG), which can then be stereoselectively transaminated, may be by tasG, to form HMG. The Diels-Alderase tas3 then uses the Dieckmann product of tasS as substrate and catalyzes the Diels-Alder cycloaddition to form the decalin ring of Sch210971 and Sch210972. This Hapsidospora irregularis protein is Trans-enoyl reductase tasC.